We begin with the raw amino-acid sequence, 303 residues long: Probable porphobilinogen deaminase (303 aa).

The residue at position 240 (C240) is an S-(dipyrrolylmethanemethyl)cysteine.

This sequence belongs to the HMBS family. Dipyrromethane is required as a cofactor.

The enzyme catalyses 4 porphobilinogen + H2O = hydroxymethylbilane + 4 NH4(+). The protein operates within porphyrin-containing compound metabolism; protoporphyrin-IX biosynthesis; coproporphyrinogen-III from 5-aminolevulinate: step 2/4. Tetrapolymerization of the monopyrrole PBG into the hydroxymethylbilane pre-uroporphyrinogen in several discrete steps. The protein is Probable porphobilinogen deaminase of Hyperthermus butylicus (strain DSM 5456 / JCM 9403 / PLM1-5).